The chain runs to 725 residues: ABC transporter G family member 7 (725 aa).

A helical membrane pass occupies residues 12–34 (VVSGIGGNGVGGALAAVAAALLV). Positions 70–316 (IRWRNITCSL…YFGNFGFLCP (247 aa)) constitute an ABC transporter domain. 108 to 115 (GPSGSGKT) serves as a coordination point for ATP. Positions 392–603 (RQFFLLLKRA…AFQGLCINEF (212 aa)) constitute an ABC transmembrane type-2 domain. A run of 4 helical transmembrane segments spans residues 446–466 (LLQV…VGVF), 493–513 (IAEI…LYPM), 528–548 (GIVT…GAMV), and 553–573 (AAMA…GYYV). The interval 676-725 (NSGVQLDKAEVDQTEKPEDDDINQPLDDQNQTSDSDDELDEIRPFVLEGL) is disordered. Positions 682–691 (DKAEVDQTEK) are enriched in basic and acidic residues.

It belongs to the ABC transporter superfamily. ABCG family. Eye pigment precursor importer (TC 3.A.1.204) subfamily.

The protein localises to the membrane. This Arabidopsis thaliana (Mouse-ear cress) protein is ABC transporter G family member 7 (ABCG7).